We begin with the raw amino-acid sequence, 346 residues long: Small ribosomal subunit biogenesis GTPase RsgA (346 aa).

Positions 1-26 (MAKRKLTQNQTRRIQSNNAKTLHRHK) are disordered. The segment covering 7 to 20 (TQNQTRRIQSNNAK) has biased composition (polar residues). The CP-type G domain maps to 103 to 271 (ENEISRPDYY…LIDSPGIREF (169 aa)). GTP-binding positions include 159–162 (NKVD) and 213–221 (GQSGVGKSS). Zn(2+) contacts are provided by cysteine 295, cysteine 300, histidine 302, and cysteine 308.

Belongs to the TRAFAC class YlqF/YawG GTPase family. RsgA subfamily. In terms of assembly, monomer. Associates with 30S ribosomal subunit, binds 16S rRNA. Zn(2+) serves as cofactor.

It is found in the cytoplasm. Functionally, one of several proteins that assist in the late maturation steps of the functional core of the 30S ribosomal subunit. Helps release RbfA from mature subunits. May play a role in the assembly of ribosomal proteins into the subunit. Circularly permuted GTPase that catalyzes slow GTP hydrolysis, GTPase activity is stimulated by the 30S ribosomal subunit. The sequence is that of Small ribosomal subunit biogenesis GTPase RsgA from Haemophilus influenzae (strain PittEE).